We begin with the raw amino-acid sequence, 176 residues long: Crossover junction endodeoxyribonuclease RuvC (176 aa).

Active-site residues include Asp-8, Glu-69, and Asp-141. Positions 8, 69, and 141 each coordinate Mg(2+).

This sequence belongs to the RuvC family. In terms of assembly, homodimer which binds Holliday junction (HJ) DNA. The HJ becomes 2-fold symmetrical on binding to RuvC with unstacked arms; it has a different conformation from HJ DNA in complex with RuvA. In the full resolvosome a probable DNA-RuvA(4)-RuvB(12)-RuvC(2) complex forms which resolves the HJ. Mg(2+) is required as a cofactor.

The protein resides in the cytoplasm. The enzyme catalyses Endonucleolytic cleavage at a junction such as a reciprocal single-stranded crossover between two homologous DNA duplexes (Holliday junction).. In terms of biological role, the RuvA-RuvB-RuvC complex processes Holliday junction (HJ) DNA during genetic recombination and DNA repair. Endonuclease that resolves HJ intermediates. Cleaves cruciform DNA by making single-stranded nicks across the HJ at symmetrical positions within the homologous arms, yielding a 5'-phosphate and a 3'-hydroxyl group; requires a central core of homology in the junction. The consensus cleavage sequence is 5'-(A/T)TT(C/G)-3'. Cleavage occurs on the 3'-side of the TT dinucleotide at the point of strand exchange. HJ branch migration catalyzed by RuvA-RuvB allows RuvC to scan DNA until it finds its consensus sequence, where it cleaves and resolves the cruciform DNA. The sequence is that of Crossover junction endodeoxyribonuclease RuvC from Pseudomonas syringae pv. tomato (strain ATCC BAA-871 / DC3000).